A 66-amino-acid polypeptide reads, in one-letter code: DNA gyrase inhibitor YacG (66 aa).

Positions 10, 13, 29, and 33 each coordinate Zn(2+).

This sequence belongs to the DNA gyrase inhibitor YacG family. In terms of assembly, interacts with GyrB. Requires Zn(2+) as cofactor.

In terms of biological role, inhibits all the catalytic activities of DNA gyrase by preventing its interaction with DNA. Acts by binding directly to the C-terminal domain of GyrB, which probably disrupts DNA binding by the gyrase. The sequence is that of DNA gyrase inhibitor YacG from Edwardsiella ictaluri (strain 93-146).